The following is a 383-amino-acid chain: Ovalbumin (383 aa).

At Gly-2 the chain carries N-acetylglycine. Residues His-22–Asp-48 constitute a signal peptide (not cleaved). The residue at position 69 (Ser-69) is a Phosphoserine. The cysteines at positions 74 and 121 are disulfide-linked. N-linked (GlcNAc...) asparagine glycosylation is found at Asn-293 and Asn-312. Position 345 is a phosphoserine (Ser-345).

Belongs to the serpin family. Ov-serpin subfamily. The signal sequence is not cleaved. The functional signal for membrane translocation of ovalbumin becomes accessible when the nascent chain is 50 to 60 residues long. The hydrophobic sequence which lies between residues 27 and 43 folds back on the preceding residues to form an amphipathic hairpin structure which is the signal element recognized by the membrane. Major protein of egg white.

The protein resides in the secreted. Its function is as follows. Storage protein of egg white. Lack protease inhibitory activity. In Coturnix coturnix (Common quail), this protein is Ovalbumin (SERPINB14).